Here is a 95-residue protein sequence, read N- to C-terminus: FXYD domain-containing ion transport regulator 6 (95 aa).

The N-terminal stretch at methionine 1–alanine 18 is a signal peptide. The Extracellular portion of the chain corresponds to serine 19–glutamine 35. The chain crosses the membrane as a helical span at residues threonine 36–serine 58. At arginine 59 to asparagine 95 the chain is on the cytoplasmic side.

It belongs to the FXYD family. Regulatory subunit of the sodium/potassium-transporting ATPase which is composed of a catalytic alpha subunit, a non-catalytic beta subunit and an additional regulatory subunit. The regulatory subunit, a member of the FXYD protein family, modulates the enzymatic activity in a tissue- and isoform-specific way by changing affinities of the Na+/K+-ATPase toward Na(+), K(+) or ATP.

The protein localises to the cell membrane. Functionally, associates with and regulates the activity of the sodium/potassium-transporting ATPase (NKA) which catalyzes the hydrolysis of ATP coupled with the exchange of Na(+) and K(+) ions across the plasma membrane. Reduces the apparent affinity for intracellular Na(+) with no change in the apparent affinity for extracellular K(+). In addition to modulating NKA kinetics, may also function as a regulator of NKA localization to the plasma membrane. The protein is FXYD domain-containing ion transport regulator 6 (FXYD6) of Macaca fascicularis (Crab-eating macaque).